The primary structure comprises 110 residues: Phosphoribosyl-AMP cyclohydrolase (110 aa).

Aspartate 80 lines the Mg(2+) pocket. Cysteine 81 contributes to the Zn(2+) binding site. 2 residues coordinate Mg(2+): aspartate 82 and aspartate 84. Residues cysteine 97 and cysteine 104 each coordinate Zn(2+).

The protein belongs to the PRA-CH family. In terms of assembly, homodimer. Mg(2+) is required as a cofactor. Requires Zn(2+) as cofactor.

The protein resides in the cytoplasm. It carries out the reaction 1-(5-phospho-beta-D-ribosyl)-5'-AMP + H2O = 1-(5-phospho-beta-D-ribosyl)-5-[(5-phospho-beta-D-ribosylamino)methylideneamino]imidazole-4-carboxamide. Its pathway is amino-acid biosynthesis; L-histidine biosynthesis; L-histidine from 5-phospho-alpha-D-ribose 1-diphosphate: step 3/9. Functionally, catalyzes the hydrolysis of the adenine ring of phosphoribosyl-AMP. This chain is Phosphoribosyl-AMP cyclohydrolase, found in Clostridium botulinum (strain 657 / Type Ba4).